A 239-amino-acid chain; its full sequence is NAD(P)H-hydrate epimerase (239 aa).

In terms of domain architecture, YjeF N-terminal spans 14–220; it reads AAALDQELMS…EMAEQYNLDI (207 aa). 64-68 serves as a coordination point for (6S)-NADPHX; it reads NNGGD. K(+) is bound by residues N65 and D126. Residues 130–136 and D159 contribute to the (6S)-NADPHX site; that span reads GFSFSGE. S162 is a K(+) binding site.

It belongs to the NnrE/AIBP family. K(+) is required as a cofactor.

It localises to the cytoplasm. The protein localises to the mitochondrion. The catalysed reaction is (6R)-NADHX = (6S)-NADHX. The enzyme catalyses (6R)-NADPHX = (6S)-NADPHX. Its function is as follows. Catalyzes the epimerization of the S- and R-forms of NAD(P)HX, a damaged form of NAD(P)H that is a result of enzymatic or heat-dependent hydration. This is a prerequisite for the S-specific NAD(P)H-hydrate dehydratase to allow the repair of both epimers of NAD(P)HX. The polypeptide is NAD(P)H-hydrate epimerase (Phaeosphaeria nodorum (strain SN15 / ATCC MYA-4574 / FGSC 10173) (Glume blotch fungus)).